The sequence spans 156 residues: 6,7-dimethyl-8-ribityllumazine synthase (156 aa).

Residues phenylalanine 23, 57 to 59 (SFE), and 81 to 83 (AVI) contribute to the 5-amino-6-(D-ribitylamino)uracil site. 86-87 (GT) provides a ligand contact to (2S)-2-hydroxy-3-oxobutyl phosphate. Catalysis depends on histidine 89, which acts as the Proton donor. Tyrosine 114 serves as a coordination point for 5-amino-6-(D-ribitylamino)uracil. A (2S)-2-hydroxy-3-oxobutyl phosphate-binding site is contributed by arginine 128.

This sequence belongs to the DMRL synthase family. In terms of assembly, forms an icosahedral capsid composed of 60 subunits, arranged as a dodecamer of pentamers.

The catalysed reaction is (2S)-2-hydroxy-3-oxobutyl phosphate + 5-amino-6-(D-ribitylamino)uracil = 6,7-dimethyl-8-(1-D-ribityl)lumazine + phosphate + 2 H2O + H(+). The protein operates within cofactor biosynthesis; riboflavin biosynthesis; riboflavin from 2-hydroxy-3-oxobutyl phosphate and 5-amino-6-(D-ribitylamino)uracil: step 1/2. In terms of biological role, catalyzes the formation of 6,7-dimethyl-8-ribityllumazine by condensation of 5-amino-6-(D-ribitylamino)uracil with 3,4-dihydroxy-2-butanone 4-phosphate. This is the penultimate step in the biosynthesis of riboflavin. The polypeptide is 6,7-dimethyl-8-ribityllumazine synthase (Halorhodospira halophila (strain DSM 244 / SL1) (Ectothiorhodospira halophila (strain DSM 244 / SL1))).